We begin with the raw amino-acid sequence, 599 residues long: NADH-quinone oxidoreductase subunit C/D (599 aa).

The interval 1-189 (MTELMTQNSA…DPFVLTKQKE (189 aa)) is NADH dehydrogenase I subunit C. The tract at residues 213 to 599 (DFMFLNLGPN…IDFVMSDVDR (387 aa)) is NADH dehydrogenase I subunit D.

The protein in the N-terminal section; belongs to the complex I 30 kDa subunit family. In the C-terminal section; belongs to the complex I 49 kDa subunit family. In terms of assembly, NDH-1 is composed of 13 different subunits. Subunits NuoB, CD, E, F, and G constitute the peripheral sector of the complex.

Its subcellular location is the cell inner membrane. It carries out the reaction a quinone + NADH + 5 H(+)(in) = a quinol + NAD(+) + 4 H(+)(out). NDH-1 shuttles electrons from NADH, via FMN and iron-sulfur (Fe-S) centers, to quinones in the respiratory chain. The immediate electron acceptor for the enzyme in this species is believed to be ubiquinone. Couples the redox reaction to proton translocation (for every two electrons transferred, four hydrogen ions are translocated across the cytoplasmic membrane), and thus conserves the redox energy in a proton gradient. This is NADH-quinone oxidoreductase subunit C/D from Sodalis glossinidius (strain morsitans).